A 201-amino-acid polypeptide reads, in one-letter code: Recombination protein RecR (201 aa).

The C4-type zinc finger occupies 59 to 74 (CEICGNMDTENMCRIC). Positions 82–177 (SIIAIVETVA…KISRLASGIP (96 aa)) constitute a Toprim domain.

Belongs to the RecR family.

Functionally, may play a role in DNA repair. It seems to be involved in an RecBC-independent recombinational process of DNA repair. It may act with RecF and RecO. The sequence is that of Recombination protein RecR from Rickettsia conorii (strain ATCC VR-613 / Malish 7).